The primary structure comprises 2193 residues: Genome polyprotein (2193 aa).

Gly2 carries the N-myristoyl glycine; by host lipid modification. Residues 2–1503 (GAQVSTQKTG…HVSRAFICLQ (1502 aa)) lie on the Cytoplasmic side of the membrane. Positions 567-583 (ELQSDVREAVEGAIGRV) are amphipathic alpha-helix. Residues His880 and Asp898 each act as for protease 2A activity in the active site. Zn(2+) contacts are provided by Cys915 and Cys917. The active-site For protease 2A activity is Cys969. Zn(2+)-binding residues include Cys975 and His977. Residues 1109–1181 (NNRWLKKFTE…EQSAPSQGDQ (73 aa)) are membrane-binding. The oligomerization stretch occupies residues 1109 to 1247 (NNRWLKKFTE…SPGAGKSVAT (139 aa)). The tract at residues 1130-1134 (AIKIQ) is RNA-binding. The 157-residue stretch at 1213 to 1369 (EKKMSNYIQF…SMYSQNGKIN (157 aa)) folds into the SF3 helicase domain. Zn(2+) is bound by residues Cys1377, Cys1389, and Cys1394. The segment at 1377-1394 (CDEECCPVNFKKCCPLVC) adopts a C4-type; degenerate zinc-finger fold. Residues 1421–1428 (EYNHRHSV) are RNA-binding. The tract at residues 1432 to 1437 (LEALFQ) is oligomerization. Residues 1504–1519 (ALTTFVSVAGIIYIIY) lie within the membrane without spanning it. Topologically, residues 1520 to 2193 (KLFAGFQGAY…TLRRKWLDSF (674 aa)) are cytoplasmic. An O-(5'-phospho-RNA)-tyrosine modification is found at Tyr1529. Positions 1549 to 1727 (GPAFEFAVAM…FSAALLKHYF (179 aa)) constitute a Peptidase C3 domain. Catalysis depends on for protease 3C activity residues His1588, Glu1619, and Cys1695. The RdRp catalytic domain occupies 1958-2074 (GHLIAFDYSG…SYPWPIDASL (117 aa)). Residues Asp1964 and Asp2060 each coordinate Mg(2+).

This sequence belongs to the picornaviruses polyprotein family. As to quaternary structure, interacts with capsid protein VP1 and capsid protein VP3 to form heterotrimeric protomers. Interacts with capsid protein VP0, and capsid protein VP3 to form heterotrimeric protomers. Five protomers subsequently associate to form pentamers which serve as building blocks for the capsid. Interacts with capsid protein VP2, capsid protein VP3 and capsid protein VP4 following cleavage of capsid protein VP0. In terms of assembly, interacts with capsid protein VP1 and capsid protein VP3 in the mature capsid. As to quaternary structure, interacts with capsid protein VP0 and capsid protein VP1 to form heterotrimeric protomers. Five protomers subsequently associate to form pentamers which serve as building blocks for the capsid. Interacts with capsid protein VP4 in the mature capsid. Interacts with protein 2C; this interaction may be important for virion morphogenesis. Interacts with capsid protein VP1 and capsid protein VP3. In terms of assembly, homodimer. As to quaternary structure, homohexamer; forms a hexameric ring structure with 6-fold symmetry characteristic of AAA+ ATPases. Interacts (via N-terminus) with host RTN3 (via reticulon domain); this interaction is important for viral replication. Interacts with capsid protein VP3; this interaction may be important for virion morphogenesis. Interacts with protein 3CD. In terms of assembly, homodimer. Interacts with host GBF1. Interacts (via GOLD domain) with host ACBD3 (via GOLD domain); this interaction allows the formation of a viral protein 3A/ACBD3 heterotetramer with a 2:2 stoichiometry, which will stimulate the recruitment of host PI4KB in order to synthesize PI4P at the viral RNA replication sites. As to quaternary structure, interacts with RNA-directed RNA polymerase. Interacts with protein 3AB and with RNA-directed RNA polymerase. In terms of assembly, interacts with Viral protein genome-linked and with protein 3CD. Mg(2+) serves as cofactor. Post-translationally, specific enzymatic cleavages in vivo by the viral proteases yield processing intermediates and the mature proteins. Myristoylation is required for the formation of pentamers during virus assembly. Further assembly of 12 pentamers and a molecule of genomic RNA generates the provirion. In terms of processing, during virion maturation, immature virions are rendered infectious following cleavage of VP0 into VP4 and VP2. This maturation seems to be an autocatalytic event triggered by the presence of RNA in the capsid and it is followed by a conformational change infectious virion. Post-translationally, myristoylation is required during RNA encapsidation and formation of the mature virus particle. VPg is uridylylated by the polymerase into VPg-pUpU. This acts as a nucleotide-peptide primer for the genomic RNA replication.

It localises to the virion. It is found in the host cytoplasm. The protein localises to the host cytoplasmic vesicle membrane. Its subcellular location is the host nucleus. It catalyses the reaction a ribonucleoside 5'-triphosphate + H2O = a ribonucleoside 5'-diphosphate + phosphate + H(+). It carries out the reaction Selective cleavage of Tyr-|-Gly bond in the picornavirus polyprotein.. The catalysed reaction is RNA(n) + a ribonucleoside 5'-triphosphate = RNA(n+1) + diphosphate. The enzyme catalyses Selective cleavage of Gln-|-Gly bond in the poliovirus polyprotein. In other picornavirus reactions Glu may be substituted for Gln, and Ser or Thr for Gly.. Replication or transcription is subject to high level of random mutations by the nucleotide analog ribavirin. In terms of biological role, forms an icosahedral capsid of pseudo T=3 symmetry with capsid proteins VP2 and VP3. The capsid is 300 Angstroms in diameter, composed of 60 copies of each capsid protein and enclosing the viral positive strand RNA genome. Capsid protein VP1 mainly forms the vertices of the capsid. Capsid protein VP1 interacts with host cell receptor to provide virion attachment to target host cells. This attachment induces virion internalization. Tyrosine kinases are probably involved in the entry process. After binding to its receptor, the capsid undergoes conformational changes. Capsid protein VP1 N-terminus (that contains an amphipathic alpha-helix) and capsid protein VP4 are externalized. Together, they shape a pore in the host membrane through which viral genome is translocated to host cell cytoplasm. Its function is as follows. Forms an icosahedral capsid of pseudo T=3 symmetry with capsid proteins VP2 and VP3. The capsid is 300 Angstroms in diameter, composed of 60 copies of each capsid protein and enclosing the viral positive strand RNA genome. Functionally, lies on the inner surface of the capsid shell. After binding to the host receptor, the capsid undergoes conformational changes. Capsid protein VP4 is released, Capsid protein VP1 N-terminus is externalized, and together, they shape a pore in the host membrane through which the viral genome is translocated into the host cell cytoplasm. Component of immature procapsids, which is cleaved into capsid proteins VP4 and VP2 after maturation. Allows the capsid to remain inactive before the maturation step. In terms of biological role, cysteine protease that cleaves viral polyprotein and specific host proteins. It is responsible for the autocatalytic cleavage between the P1 and P2 regions, which is the first cleavage occurring in the polyprotein. Also cleaves the host translation initiation factor EIF4G1, in order to shut down the capped cellular mRNA translation. Inhibits the host nucleus-cytoplasm protein and RNA trafficking by cleaving host members of the nuclear pores. Counteracts stress granule formation probably by antagonizing its assembly or promoting its dissassembly. Its function is as follows. Plays an essential role in the virus replication cycle by acting as a viroporin. Creates a pore in the host endoplasmic reticulum and as a consequence releases Ca2+ in the cytoplasm of infected cell. In turn, high levels of cytoplasmic calcium may trigger membrane trafficking and transport of viral ER-associated proteins to viroplasms, sites of viral genome replication. Functionally, induces and associates with structural rearrangements of intracellular membranes. Displays RNA-binding, nucleotide binding and NTPase activities. May play a role in virion morphogenesis and viral RNA encapsidation by interacting with the capsid protein VP3. Localizes the viral replication complex to the surface of membranous vesicles. Together with protein 3CD binds the Cis-Active RNA Element (CRE) which is involved in RNA synthesis initiation. Acts as a cofactor to stimulate the activity of 3D polymerase, maybe through a nucleid acid chaperone activity. In terms of biological role, localizes the viral replication complex to the surface of membranous vesicles. It inhibits host cell endoplasmic reticulum-to-Golgi apparatus transport and causes the disassembly of the Golgi complex, possibly through GBF1 interaction. This would result in depletion of MHC, trail receptors and IFN receptors at the host cell surface. Plays an essential role in viral RNA replication by recruiting ACBD3 and PI4KB at the viral replication sites, thereby allowing the formation of the rearranged membranous structures where viral replication takes place. Its function is as follows. Acts as a primer for viral RNA replication and remains covalently bound to viral genomic RNA. VPg is uridylylated prior to priming replication into VPg-pUpU. The oriI viral genomic sequence may act as a template for this. The VPg-pUpU is then used as primer on the genomic RNA poly(A) by the RNA-dependent RNA polymerase to replicate the viral genome. During genome replication, the VPg-RNA linkage is removed by the host TDP2, thereby accelerating replication. During the late stage of the replication cycle, host TDP2 is excluded from sites of viral RNA synthesis and encapsidation, allowing for the generation of progeny virions. Functionally, involved in the viral replication complex and viral polypeptide maturation. It exhibits protease activity with a specificity and catalytic efficiency that is different from protease 3C. Protein 3CD lacks polymerase activity. Protein 3CD binds to the 5'UTR of the viral genome. Replicates the viral genomic RNA on the surface of intracellular membranes. May form linear arrays of subunits that propagate along a strong head-to-tail interaction called interface-I. Covalently attaches UMP to a tyrosine of VPg, which is used to prime RNA synthesis. The positive stranded RNA genome is first replicated at virus induced membranous vesicles, creating a dsRNA genomic replication form. This dsRNA is then used as template to synthesize positive stranded RNA genomes. ss(+)RNA genomes are either translated, replicated or encapsidated. In terms of biological role, major viral protease that mediates proteolytic processing of the polyprotein. Cleaves host EIF5B, contributing to host translation shutoff. Also cleaves host PABPC1, contributing to host translation shutoff. Cleaves host NLRP1, triggers host N-glycine-mediated degradation of the autoinhibitory NLRP1 N-terminal fragment. This is Genome polyprotein from Echovirus 9 (strain Hill).